The chain runs to 198 residues: Small ribosomal subunit protein uS5 (198 aa).

The S5 DRBM domain maps to 46-109; the sequence is LEDDVLEISM…NNAKLNIFKV (64 aa).

This sequence belongs to the universal ribosomal protein uS5 family. Part of the 30S ribosomal subunit. Contacts protein S4.

Functionally, with S4 and S12 plays an important role in translational accuracy. The chain is Small ribosomal subunit protein uS5 from Archaeoglobus fulgidus (strain ATCC 49558 / DSM 4304 / JCM 9628 / NBRC 100126 / VC-16).